We begin with the raw amino-acid sequence, 379 residues long: MIISSSTDYRRAAQKRLPPFLFHYIDGGAYAEHTLRRNVDDLAEVALRQRVLKDMSQLDTSIDLFGEKLSMPVALSPVGLTGMYARRGEVQAARAADARGIPFTMSSVSVCPIEEVAPRLSRPMWFQLYVLKDRGFMRNALERAQAAGCSTLVFTVDMPVPGARYRDAHSGMSGPNAALRRYAQAVMHPRWAWDVGLLGRPHDLGNISRYLGKPTGLEDYMGYLGANFDPSISWKDLEWIREFWKGPMLIKGILDPDDARDAVRFGADGIIVSNHGGRQLDGVLSSARALPAIADAVKGQIKILADSGIRSGLDVVRMIALGADAAMLGRAYIYALAAAGQSGVDHLLGLIEKEIRVAMTLTSVSSISQITSELLVREP.

The FMN hydroxy acid dehydrogenase domain occupies M1–P379. Substrate is bound at residue Y24. Residues S106 and Q127 each contribute to the FMN site. Residue Y129 coordinates substrate. An FMN-binding site is contributed by T155. R164 is a binding site for substrate. K251 is a binding site for FMN. H275 serves as the catalytic Proton acceptor. R278 serves as a coordination point for substrate. D306–R330 lines the FMN pocket.

The protein belongs to the FMN-dependent alpha-hydroxy acid dehydrogenase family. FMN is required as a cofactor.

It localises to the cell membrane. It carries out the reaction (S)-lactate + A = pyruvate + AH2. Catalyzes the conversion of L-lactate to pyruvate. Is coupled to the respiratory chain. The sequence is that of L-lactate dehydrogenase from Alcaligenes faecalis.